Here is a 37-residue protein sequence, read N- to C-terminus: Large ribosomal subunit protein bL36c (37 aa).

This sequence belongs to the bacterial ribosomal protein bL36 family.

It localises to the plastid. The protein is Large ribosomal subunit protein bL36c (rpl36) of Epifagus virginiana (Beechdrops).